A 261-amino-acid chain; its full sequence is U11/U12 small nuclear ribonucleoprotein 31 kDa protein (261 aa).

The segment at 18 to 51 (YYRYSSVAAPPPSNPKHQPSSSAKSSAPGGGSGG) is disordered. In terms of domain architecture, RRM spans 57 to 135 (STLYVSNLDF…RKLTVSIAAD (79 aa)). The CCHC-type zinc-finger motif lies at 153-169 (RCYECGDEGHLSYECPK). The tract at residues 165–261 (YECPKNQLGP…YFSDESDDED (97 aa)) is disordered. The segment covering 226 to 235 (AGERLRKREA) has biased composition (basic and acidic residues).

Component of the U11/U12 snRNPs that are part of the U12-type spliceosome. Ubiquitous. Abundantly expressed in the shoot apical neristem.

Its subcellular location is the nucleus. RNA chaperone required for proper U12 intron splicing and for normal growth and development of plants. Mainly responsible for meristem activity. Plays a role in regulating cell division. In Arabidopsis thaliana (Mouse-ear cress), this protein is U11/U12 small nuclear ribonucleoprotein 31 kDa protein (SNRNP31).